A 385-amino-acid chain; its full sequence is Gibberellin 20 oxidase 5 (385 aa).

Residues Asp-224–Pro-324 form the Fe2OG dioxygenase domain. The Fe cation site is built by His-249, Asp-251, and His-305. Residue Arg-315 is part of the active site.

It belongs to the iron/ascorbate-dependent oxidoreductase family. GA20OX subfamily. Fe(2+) is required as a cofactor. The cofactor is L-ascorbate. Expressed in 3-day-old seedlings and siliques. Detected in dry seeds, roots, old leaves and inflorescences.

It catalyses the reaction gibberellin A12 + 2 2-oxoglutarate + 3 O2 + H(+) = gibberellin A9 + 2 succinate + 3 CO2 + 2 H2O. It carries out the reaction gibberellin A53 + 2 2-oxoglutarate + 3 O2 + H(+) = gibberellin A20 + 2 succinate + 3 CO2 + 2 H2O. It functions in the pathway plant hormone biosynthesis; gibberellin biosynthesis. Key oxidase enzyme in the biosynthesis of gibberellin that catalyzes the conversion of GA12 and GA53 to GA9 and GA20 respectively, via a three-step oxidation at C-20 of the GA skeleton. The sequence is that of Gibberellin 20 oxidase 5 (GA20OX5) from Arabidopsis thaliana (Mouse-ear cress).